The primary structure comprises 558 residues: UvrABC system protein C (558 aa).

A GIY-YIG domain is found at 12–92 (LLPGVYIFYG…IFNHKPKYNV (81 aa)). The 36-residue stretch at 200-235 (SETLDLIEEKMKKHAKMMDFENAAKYRDLLVKFENV) folds into the UVR domain.

Belongs to the UvrC family. Interacts with UvrB in an incision complex.

It is found in the cytoplasm. Functionally, the UvrABC repair system catalyzes the recognition and processing of DNA lesions. UvrC both incises the 5' and 3' sides of the lesion. The N-terminal half is responsible for the 3' incision and the C-terminal half is responsible for the 5' incision. This is UvrABC system protein C from Pseudothermotoga lettingae (strain ATCC BAA-301 / DSM 14385 / NBRC 107922 / TMO) (Thermotoga lettingae).